Reading from the N-terminus, the 461-residue chain is MALHEPPSKLNRHSHSNLLKPPSLNKPILTFADNDCLKTPTMNDMLKTPTVNSPRHTPMNIDGTPKVNGFSGFTPQTDQKFFGEHEPLFNQMHTTTLMPAPSSSYKEPAYSSEQPSSSSDEAKPKELLGSNSFGVPRMTNGNSKQKPEELTLKDIEISSTGPGGVDSPGLSAAMFQFSPMVEHFLQNLTNKAGLPELVVDSKTAGLNHQEPSDLIKSVQVRRSSIEDQKFSDVLHVPTLPRKTSEPSHLGSSLQNEHPQSNSRPSTVIPRVQRTNTSASLTRSMDHSSMSPISAHDDPYSNSASYSSLSTHTSFSDSASLAHFEPKTEPMDDYSYNFSDNDFNSFEFSSTSEELKNIGCQKMKSSKMPLQDRPYKCPRDGCDRRFSRSDELTRHIRIHTGQKPFQCRICMRAFSRSDHLTTHVRTHTGEKPFSCDICGRKFARSDERKRHTKVHKTSRSGS.

Disordered stretches follow at residues 1 to 25, 96 to 152, and 232 to 308; these read MALH…PSLN, TLMP…ELTL, and DVLH…YSSL. Composition is skewed to polar residues over residues 96–105, 129–144, 249–265, and 272–291; these read TLMPAPSSSY, GSNS…GNSK, LGSS…SRPS, and QRTN…SMSP. Residues 299-308 are compositionally biased toward low complexity; the sequence is YSNSASYSSL. 3 C2H2-type zinc fingers span residues 374–398, 404–426, and 432–454; these read YKCP…IRIH, FQCR…VRTH, and FSCD…TKVH.

The protein belongs to the EGR C2H2-type zinc-finger protein family. In terms of tissue distribution, expressed in sheath cells and distal tip cells of the somatic gonad, as well as in the intestine and sperm (at protein level). Expression not observed in oocytes (at protein level).

It is found in the nucleus. The protein localises to the cytoplasm. It localises to the perinuclear region. In terms of biological role, sequence-specific DNA-binding transcription factor. Plays a role in oocyte development, acting cell-autonomously in the somatic gonad. Involved in negative regulation of oocyte MAPK activation and inhibits oocyte maturation and ovulation. This chain is Early growth response factor homolog 1, found in Caenorhabditis elegans.